The sequence spans 607 residues: UvrABC system protein C (607 aa).

The 78-residue stretch at 15–92 (SQPGSYQMKD…IKRYRPYFNI (78 aa)) folds into the GIY-YIG domain. The UVR domain occupies 197–232 (GKAISDIKKKMKRASDSTEYELAADFRDRLKFIDQT).

Belongs to the UvrC family. In terms of assembly, interacts with UvrB in an incision complex.

It is found in the cytoplasm. Functionally, the UvrABC repair system catalyzes the recognition and processing of DNA lesions. UvrC both incises the 5' and 3' sides of the lesion. The N-terminal half is responsible for the 3' incision and the C-terminal half is responsible for the 5' incision. This Oenococcus oeni (strain ATCC BAA-331 / PSU-1) protein is UvrABC system protein C.